The primary structure comprises 403 residues: Ribosomal RNA large subunit methyltransferase I (403 aa).

A PUA domain is found at 9 to 88 (YPRLVLSKGR…EPVDIAFFTR (80 aa)).

It belongs to the methyltransferase superfamily. RlmI family.

It is found in the cytoplasm. It catalyses the reaction cytidine(1962) in 23S rRNA + S-adenosyl-L-methionine = 5-methylcytidine(1962) in 23S rRNA + S-adenosyl-L-homocysteine + H(+). Its function is as follows. Specifically methylates the cytosine at position 1962 (m5C1962) of 23S rRNA. The sequence is that of Ribosomal RNA large subunit methyltransferase I from Salmonella arizonae (strain ATCC BAA-731 / CDC346-86 / RSK2980).